A 429-amino-acid polypeptide reads, in one-letter code: Histidine--tRNA ligase (429 aa).

This sequence belongs to the class-II aminoacyl-tRNA synthetase family. As to quaternary structure, homodimer.

Its subcellular location is the cytoplasm. It catalyses the reaction tRNA(His) + L-histidine + ATP = L-histidyl-tRNA(His) + AMP + diphosphate + H(+). The protein is Histidine--tRNA ligase of Dechloromonas aromatica (strain RCB).